A 550-amino-acid chain; its full sequence is Chaperonin GroEL (550 aa).

Residues threonine 30 to proline 33, lysine 51, aspartate 87 to threonine 91, glycine 415, asparagine 479 to alanine 481, and aspartate 495 each bind ATP.

This sequence belongs to the chaperonin (HSP60) family. In terms of assembly, forms a cylinder of 14 subunits composed of two heptameric rings stacked back-to-back. Interacts with the co-chaperonin GroES.

It is found in the cytoplasm. It catalyses the reaction ATP + H2O + a folded polypeptide = ADP + phosphate + an unfolded polypeptide.. In terms of biological role, together with its co-chaperonin GroES, plays an essential role in assisting protein folding. The GroEL-GroES system forms a nano-cage that allows encapsulation of the non-native substrate proteins and provides a physical environment optimized to promote and accelerate protein folding. This chain is Chaperonin GroEL, found in Polaromonas sp. (strain JS666 / ATCC BAA-500).